A 170-amino-acid polypeptide reads, in one-letter code: Phosphopantetheine adenylyltransferase (170 aa).

Substrate is bound at residue Thr17. Residues 17-18 (TF) and His25 contribute to the ATP site. Substrate contacts are provided by Lys49, Leu81, and Arg95. ATP is bound by residues 96 to 98 (GLR), Glu106, and 131 to 137 (LMYISST).

It belongs to the bacterial CoaD family. In terms of assembly, homohexamer. It depends on Mg(2+) as a cofactor.

It localises to the cytoplasm. The catalysed reaction is (R)-4'-phosphopantetheine + ATP + H(+) = 3'-dephospho-CoA + diphosphate. It participates in cofactor biosynthesis; coenzyme A biosynthesis; CoA from (R)-pantothenate: step 4/5. Functionally, reversibly transfers an adenylyl group from ATP to 4'-phosphopantetheine, yielding dephospho-CoA (dPCoA) and pyrophosphate. The protein is Phosphopantetheine adenylyltransferase of Legionella pneumophila subsp. pneumophila (strain Philadelphia 1 / ATCC 33152 / DSM 7513).